A 464-amino-acid chain; its full sequence is Phosphoglucosamine mutase (464 aa).

Catalysis depends on Ser112, which acts as the Phosphoserine intermediate. Residues Ser112, Asp252, Asp254, and Asp256 each coordinate Mg(2+). Ser112 carries the phosphoserine modification.

It belongs to the phosphohexose mutase family. Mg(2+) is required as a cofactor. In terms of processing, activated by phosphorylation.

It carries out the reaction alpha-D-glucosamine 1-phosphate = D-glucosamine 6-phosphate. Catalyzes the conversion of glucosamine-6-phosphate to glucosamine-1-phosphate. The chain is Phosphoglucosamine mutase from Synechococcus sp. (strain CC9605).